Consider the following 342-residue polypeptide: Anthranilate phosphoribosyltransferase (342 aa).

5-phospho-alpha-D-ribose 1-diphosphate-binding positions include Gly-74, 77-78 (GD), Thr-82, 84-87 (NVST), 101-109 (KHGNRSVSG), and Ser-113. Residue Gly-74 participates in anthranilate binding. Ser-86 serves as a coordination point for Mg(2+). Asn-104 is an anthranilate binding site. Residue Arg-159 coordinates anthranilate. Residues Asp-218 and Glu-219 each coordinate Mg(2+).

The protein belongs to the anthranilate phosphoribosyltransferase family. As to quaternary structure, homodimer. The cofactor is Mg(2+).

The catalysed reaction is N-(5-phospho-beta-D-ribosyl)anthranilate + diphosphate = 5-phospho-alpha-D-ribose 1-diphosphate + anthranilate. It functions in the pathway amino-acid biosynthesis; L-tryptophan biosynthesis; L-tryptophan from chorismate: step 2/5. Functionally, catalyzes the transfer of the phosphoribosyl group of 5-phosphorylribose-1-pyrophosphate (PRPP) to anthranilate to yield N-(5'-phosphoribosyl)-anthranilate (PRA). The protein is Anthranilate phosphoribosyltransferase of Sulfolobus acidocaldarius (strain ATCC 33909 / DSM 639 / JCM 8929 / NBRC 15157 / NCIMB 11770).